The following is a 296-amino-acid chain: Ribosomal protein L11 methyltransferase (296 aa).

Positions 151, 172, 194, and 233 each coordinate S-adenosyl-L-methionine.

It belongs to the methyltransferase superfamily. PrmA family.

The protein resides in the cytoplasm. It carries out the reaction L-lysyl-[protein] + 3 S-adenosyl-L-methionine = N(6),N(6),N(6)-trimethyl-L-lysyl-[protein] + 3 S-adenosyl-L-homocysteine + 3 H(+). Its function is as follows. Methylates ribosomal protein L11. The chain is Ribosomal protein L11 methyltransferase from Dechloromonas aromatica (strain RCB).